A 60-amino-acid polypeptide reads, in one-letter code: Large ribosomal subunit protein bL32 (60 aa).

The protein belongs to the bacterial ribosomal protein bL32 family.

The chain is Large ribosomal subunit protein bL32 from Borrelia duttonii (strain Ly).